The sequence spans 90 residues: MQAFNTDVRNRIIKLVKGILEQNALAADVTPQAKLVDVGLTSMDMVNLMLGVEAEFDFTIPQSEITPENFQSVETLERMVMTQLQPATAA.

The 79-residue stretch at 6 to 84 (TDVRNRIIKL…TLERMVMTQL (79 aa)) folds into the Carrier domain. Serine 42 carries the O-(pantetheine 4'-phosphoryl)serine modification.

Post-translationally, 4'-phosphopantetheine is transferred from CoA to a specific serine of the apo-form of this carrier protein.

Aminoacyl carrier protein. Can be charged with L-glycine via the formation of a thioester bond between the amino acid and the 4'-phosphopantetheinyl prosthetic group, catalyzed by the bll0957 ligase. This Bradyrhizobium diazoefficiens (strain JCM 10833 / BCRC 13528 / IAM 13628 / NBRC 14792 / USDA 110) protein is Aminoacyl carrier protein 1.